Here is a 106-residue protein sequence, read N- to C-terminus: ATP-dependent Clp protease adapter protein ClpS (106 aa).

The protein belongs to the ClpS family. As to quaternary structure, binds to the N-terminal domain of the chaperone ClpA.

Functionally, involved in the modulation of the specificity of the ClpAP-mediated ATP-dependent protein degradation. The polypeptide is ATP-dependent Clp protease adapter protein ClpS (Serratia proteamaculans (strain 568)).